Here is a 521-residue protein sequence, read N- to C-terminus: Bifunctional dihydrofolate reductase-thymidylate synthase (521 aa).

The region spanning 17 to 194 (NYQVVVAGTR…IRHSFVSFVR (178 aa)) is the DHFR domain. Valine 21 is a substrate binding site. NADP(+) contacts are provided by residues alanine 23 and 29–35 (GIGKDGV). Residue aspartate 43 coordinates substrate. Residues 67 to 69 (RKT) and 88 to 91 (LTRS) each bind NADP(+). Isoleucine 130 contributes to the substrate binding site. 131–138 (GGGQVLRE) is a binding site for NADP(+). Residue threonine 151 participates in substrate binding. The thymidylate synthase stretch occupies residues 197-521 (KSVAETHESN…HQKIEMKMAV (325 aa)). Arginine 258 is a dUMP binding site. The active site involves cysteine 403. DUMP-binding positions include histidine 404, 422-426 (QRSAD), asparagine 434, and 464-466 (HVY).

This sequence in the N-terminal section; belongs to the dihydrofolate reductase family. It in the C-terminal section; belongs to the thymidylate synthase family.

It carries out the reaction (6S)-5,6,7,8-tetrahydrofolate + NADP(+) = 7,8-dihydrofolate + NADPH + H(+). It catalyses the reaction dUMP + (6R)-5,10-methylene-5,6,7,8-tetrahydrofolate = 7,8-dihydrofolate + dTMP. It participates in cofactor biosynthesis; tetrahydrofolate biosynthesis; 5,6,7,8-tetrahydrofolate from 7,8-dihydrofolate: step 1/1. Bifunctional enzyme. Involved in de novo dTMP biosynthesis. Key enzyme in folate metabolism. Can play two different roles depending on the source of dihydrofolate: de novo synthesis of tetrahydrofolate or recycling of the dihydrofolate released as one of the end products of the TS catalyzed reaction. Catalyzes an essential reaction for de novo glycine and purine synthesis, DNA precursor synthesis, and for the conversion of dUMP to dTMP. This Zea mays (Maize) protein is Bifunctional dihydrofolate reductase-thymidylate synthase (DRTS).